The sequence spans 879 residues: Bifunctional uridylyltransferase/uridylyl-removing enzyme (879 aa).

A uridylyltransferase region spans residues 1-340 (MANVQEDKDF…GTQDLQHAEH (340 aa)). The interval 341 to 700 (ISDDFAVANK…IGDENNYGTT (360 aa)) is uridylyl-removing. The HD domain maps to 458–580 (VDEHTFRLVR…VSTPERLDYL (123 aa)). ACT domains follow at residues 701–782 (ELFI…STKR) and 809–879 (TFEL…DLEF).

This sequence belongs to the GlnD family. It depends on Mg(2+) as a cofactor.

It catalyses the reaction [protein-PII]-L-tyrosine + UTP = [protein-PII]-uridylyl-L-tyrosine + diphosphate. It carries out the reaction [protein-PII]-uridylyl-L-tyrosine + H2O = [protein-PII]-L-tyrosine + UMP + H(+). Uridylyltransferase (UTase) activity is inhibited by glutamine, while glutamine activates uridylyl-removing (UR) activity. Functionally, modifies, by uridylylation and deuridylylation, the PII regulatory proteins (GlnB and homologs), in response to the nitrogen status of the cell that GlnD senses through the glutamine level. Under low glutamine levels, catalyzes the conversion of the PII proteins and UTP to PII-UMP and PPi, while under higher glutamine levels, GlnD hydrolyzes PII-UMP to PII and UMP (deuridylylation). Thus, controls uridylylation state and activity of the PII proteins, and plays an important role in the regulation of nitrogen assimilation and metabolism. This Idiomarina loihiensis (strain ATCC BAA-735 / DSM 15497 / L2-TR) protein is Bifunctional uridylyltransferase/uridylyl-removing enzyme.